The primary structure comprises 234 residues: Response regulator RppA (234 aa).

One can recognise a Response regulatory domain in the interval 2 to 118 (RILLVEDETD…ELLARLRALQ (117 aa)). At D53 the chain carries 4-aspartylphosphate. The ompR/PhoB-type DNA-binding region spans 126–232 (PQILTLGNFS…VPGQGYRFTL (107 aa)).

Interacts with histidine kinase Hik2; may accept phosphate from Hik2.

Functionally, member of two-component regulatory system RppA/RppB, involved in the establishment of the appropriate stoichiometry between the 2 photosystems. It senses changes in the plastoquinone (PQ) redox poise. Another group shows this two-component pair, renamed NrsR/NrsS, controls the nickel-dependent expression of the nrsBACD operon; they suggest the photosystem-related activities seen earlier are due to the expression of NrsS (RppB) in the absence of its natural substrate NrsR (RppA). May accept phosphate from Hik2 in a possible Hik2/RppA two-component system. This chain is Response regulator RppA, found in Synechocystis sp. (strain ATCC 27184 / PCC 6803 / Kazusa).